The following is a 494-amino-acid chain: Inositol-trisphosphate 3-kinase homolog (494 aa).

ATP-binding positions include Ser-206, Lys-218, 260–262 (EDL), and Asp-276. Residues Lys-278 and 322 to 329 (KLRYMQFR) each bind substrate. Residues Lys-346 and Asp-426 each coordinate ATP. Lys-429 is a substrate binding site.

The protein belongs to the inositol phosphokinase (IPK) family. Expressed in spermatheca.

It catalyses the reaction 1D-myo-inositol 1,4,5-trisphosphate + ATP = 1D-myo-inositol 1,3,4,5-tetrakisphosphate + ADP + H(+). With respect to regulation, unlike mammalian IP3K, may not be regulated by calmodulin. Functionally, probably by regulating inositol 1,4,5-trisphosphate levels, negatively regulates posterior body wall muscle contractions required for defecation and let-23 signaling pathway that controls spermathecal dilation and ovulation. May also regulate ovulation downstream of actin cross-linker fln-1. This Caenorhabditis elegans protein is Inositol-trisphosphate 3-kinase homolog.